A 764-amino-acid chain; its full sequence is Hemocyte protein-glutamine gamma-glutamyltransferase (764 aa).

Residues Cys343, His402, and Asp425 contribute to the active site. The Ca(2+) site is built by Asn465, Asp467, Glu522, and Glu527.

The protein belongs to the transglutaminase superfamily. Transglutaminase family. The cofactor is Ca(2+). In terms of tissue distribution, mainly expressed in hemocytes, hepatopancreas, and gastric tissues. On the other hand nothing was detected in the heart, intestine and muscle.

The protein localises to the membrane. The enzyme catalyses L-glutaminyl-[protein] + L-lysyl-[protein] = [protein]-L-lysyl-N(6)-5-L-glutamyl-[protein] + NH4(+). Its function is as follows. Catalyzes the cross-linking of proteins and the conjugation of polyamines to proteins. In Tachypleus tridentatus (Japanese horseshoe crab), this protein is Hemocyte protein-glutamine gamma-glutamyltransferase.